The following is a 413-amino-acid chain: Type II methyltransferase M.NaeI (413 aa).

One can recognise an SAM-dependent MTase C5-type domain in the interval 4 to 317 (LEVVEICAGA…KRIRAALNME (314 aa)). Residue cysteine 78 is part of the active site.

It belongs to the class I-like SAM-binding methyltransferase superfamily. C5-methyltransferase family.

It catalyses the reaction a 2'-deoxycytidine in DNA + S-adenosyl-L-methionine = a 5-methyl-2'-deoxycytidine in DNA + S-adenosyl-L-homocysteine + H(+). A methylase that recognizes the double-stranded sequence 5'-GCCGGC-3', methylates C-? on both strands, and protects the DNA from cleavage by the NaeI endonuclease. This Lentzea aerocolonigenes (Lechevalieria aerocolonigenes) protein is Type II methyltransferase M.NaeI.